The primary structure comprises 469 residues: MPRLSRRQLLKTAAISTALSTVPAPLLAASREKLVVPPLIEVRRGRPIVLTMQETNYPLDGSHNVTVWGFNGNYLGPTIKIKSGSFAKLNYHNNLPQSVALSIQGLQASGELFGGAARVLKKGESWAPIVPIEQPAASCWYRSATLANSAYQTYRGLAGMWLIEDEQSLKANLPNKYGVDDIPLILQDMEFNNDGLQLFKQNQPHFVGNRLLVNGIEAPYLDVARGWIRLRLLNASLARAYDLRLDNDQEMLLIAQDLSFLPKAKSVKSLVLSPGERAEILVNMNEIDNVSLISGSKRSLYEKIKNMLFSGDELANNTVLELRAQGQLSAFNKQPNLTFETDAPAILQQAVAQTREFNIDVTNGLINQRRFDPRKVDVMARKGTIERWILNASLPVGFTIQGAKFVVESQGEHQLQAEELAWKDTVWVKNKTQILVKFDQASSGNFPFLFGVSNLMLEDMGCLGVLMVQ.

The segment at residues 1–29 is a signal peptide (tat-type signal); the sequence is MPRLSRRQLLKTAAISTALSTVPAPLLAA. Positions 228-286 constitute a Plastocyanin-like domain; sequence IRLRLLNASLARAYDLRLDNDQEMLLIAQDLSFLPKAKSVKSLVLSPGERAEILVNMNE.

This sequence belongs to the FtsP family. Predicted to be exported by the Tat system. The position of the signal peptide cleavage has not been experimentally proven.

It is found in the periplasm. Functionally, cell division protein that is required for growth during stress conditions. May be involved in protecting or stabilizing the divisomal assembly under conditions of stress. In Haemophilus influenzae (strain 86-028NP), this protein is Cell division protein FtsP.